The following is a 251-amino-acid chain: GTP cyclohydrolase 1 type 2 homolog (251 aa).

A divalent metal cation is bound by residues H63, H64, D101, H219, and E223.

This sequence belongs to the GTP cyclohydrolase I type 2/NIF3 family. In terms of assembly, toroid-shaped homohexamer. In the hexamer, 3 dimers assemble to form a ring-like structure surrounding a central hole.

This chain is GTP cyclohydrolase 1 type 2 homolog, found in Haemophilus influenzae (strain ATCC 51907 / DSM 11121 / KW20 / Rd).